A 698-amino-acid polypeptide reads, in one-letter code: Elongation factor G (698 aa).

Residues 10-285 (ASTRNIGIMA…AVVDFLPNPL (276 aa)) enclose the tr-type G domain. GTP is bound by residues 19–26 (AHIDAGKT), 83–87 (DTPGH), and 137–140 (NKMD).

It belongs to the TRAFAC class translation factor GTPase superfamily. Classic translation factor GTPase family. EF-G/EF-2 subfamily.

The protein resides in the cytoplasm. Catalyzes the GTP-dependent ribosomal translocation step during translation elongation. During this step, the ribosome changes from the pre-translocational (PRE) to the post-translocational (POST) state as the newly formed A-site-bound peptidyl-tRNA and P-site-bound deacylated tRNA move to the P and E sites, respectively. Catalyzes the coordinated movement of the two tRNA molecules, the mRNA and conformational changes in the ribosome. The protein is Elongation factor G of Frankia alni (strain DSM 45986 / CECT 9034 / ACN14a).